Here is a 930-residue protein sequence, read N- to C-terminus: Nonribosomal peptide synthetase acyN (930 aa).

Residues 15-436 (LDPQDNKISV…AGRAKETIIV (422 aa)) form an adenylation (A) domain region. A Carrier domain is found at 567-646 (APSNETEATI…GLAGTLETLM (80 aa)). S604 carries the O-(pantetheine 4'-phosphoryl)serine modification. The interval 665–914 (PLWLVHPGVG…HYTMLGPDNI (250 aa)) is thioesterase (TE) domain.

The protein belongs to the NRP synthetase family.

The catalysed reaction is 2 3-phenylpyruvate + 2 ATP = polyporic acid + 2 AMP + 2 diphosphate + H(+). Its pathway is secondary metabolite biosynthesis. With respect to regulation, hydroxyphenylpyruvate acts more like a competitive inhibitor rather than a substrate. In terms of biological role, nonribosomal peptide synthetase that mediates the biosynthesis of polyporic acid via the condensation of 2 phenylpyruvate units. Polyporic acid is further hydroxylaed by the cytochrome P450 monooxygenase MO6277 into less toxic ascocorynin. The chain is Nonribosomal peptide synthetase acyN from Ascocoryne sarcoides (Purple jellydisc fungus).